Reading from the N-terminus, the 101-residue chain is MTVRILAVCGNGQGSSMIMKMKVDQFLTQSNIDHTVNSCAVGEYKSELSGADIIIASTHIAGEISVTGNKYVVGVRNMLSPADFGPKLLEVIKEHFPQDVK.

The PTS EIIB type-2 domain occupies 3–96 (VRILAVCGNG…KLLEVIKEHF (94 aa)). Catalysis depends on Cys-9, which acts as the Phosphocysteine intermediate. Cys-9 is modified (phosphocysteine).

The protein localises to the cytoplasm. It carries out the reaction N(pros)-phospho-L-histidyl-[protein] + L-ascorbate(out) = L-ascorbate 6-phosphate(in) + L-histidyl-[protein]. Its function is as follows. The phosphoenolpyruvate-dependent sugar phosphotransferase system (sugar PTS), a major carbohydrate active transport system, catalyzes the phosphorylation of incoming sugar substrates concomitantly with their translocation across the cell membrane. The enzyme II UlaABC PTS system is involved in ascorbate transport. This Salmonella choleraesuis (strain SC-B67) protein is Ascorbate-specific PTS system EIIB component (ulaB).